We begin with the raw amino-acid sequence, 720 residues long: Engulfment and cell motility protein 3 (720 aa).

In terms of domain architecture, ELMO spans 307–479 (EQRDQLQALR…VVREQLARTL (173 aa)). Residues 542-664 (RLCEGMLFRK…TDGLSALLGS (123 aa)) form the PH domain. Positions 696–706 (PEQPPPVPPPP) match the SH3-binding motif.

In terms of assembly, probably interacts directly with the SH3-domain of DOCK1 via its SH3-binding site. Part of a complex with DOCK1 and RAC1. Interacts with ADGRB3.

The protein resides in the cytoplasm. Its function is as follows. Involved in cytoskeletal rearrangements required for phagocytosis of apoptotic cells and cell motility. Acts in association with DOCK1 and CRK. Was initially proposed to be required in complex with DOCK1 to activate Rac Rho small GTPases. May enhance the guanine nucleotide exchange factor (GEF) activity of DOCK1. This is Engulfment and cell motility protein 3 (Elmo3) from Mus musculus (Mouse).